The chain runs to 453 residues: Growth/differentiation factor 9 (453 aa).

A signal peptide spans 1–27; it reads MALPNKFFLWFCCFAWLCFPISLDSLP. Positions 28-318 are excised as a propeptide; it reads SRGEAQIVAR…EGVRSSRHRR (291 aa). N-linked (GlcNAc...) asparagine glycans are attached at residues Asn163, Asn236, Asn255, and Asn269. Positions 304–328 are disordered; it reads GEEAAEGVRSSRHRRDQESASSELK. Basic and acidic residues predominate over residues 318–328; the sequence is RDQESASSELK. Residue Asn337 is glycosylated (N-linked (GlcNAc...) asparagine). 3 disulfides stabilise this stretch: Cys352/Cys418, Cys381/Cys450, and Cys385/Cys452.

It belongs to the TGF-beta family. In terms of assembly, homodimer or heterodimer (Potential). But, in contrast to other members of this family, cannot be disulfide-linked. In terms of processing, phosphorylated; phosphorylation is critical for GDF9 function.

Its subcellular location is the secreted. In terms of biological role, required for ovarian folliculogenesis. The protein is Growth/differentiation factor 9 (GDF9) of Ovis aries (Sheep).